The following is a 187-amino-acid chain: Large ribosomal subunit protein uL5 (187 aa).

This sequence belongs to the universal ribosomal protein uL5 family. As to quaternary structure, part of the 50S ribosomal subunit; part of the 5S rRNA/L5/L18/L25 subcomplex. Contacts the 5S rRNA and the P site tRNA. Forms a bridge to the 30S subunit in the 70S ribosome.

Its function is as follows. This is one of the proteins that bind and probably mediate the attachment of the 5S RNA into the large ribosomal subunit, where it forms part of the central protuberance. In the 70S ribosome it contacts protein S13 of the 30S subunit (bridge B1b), connecting the 2 subunits; this bridge is implicated in subunit movement. Contacts the P site tRNA; the 5S rRNA and some of its associated proteins might help stabilize positioning of ribosome-bound tRNAs. The protein is Large ribosomal subunit protein uL5 of Mycobacterium leprae (strain Br4923).